We begin with the raw amino-acid sequence, 445 residues long: Probable D-serine dehydratase (445 aa).

Lys-111 bears the N6-(pyridoxal phosphate)lysine mark.

It belongs to the serine/threonine dehydratase family. DsdA subfamily. The cofactor is pyridoxal 5'-phosphate.

The catalysed reaction is D-serine = pyruvate + NH4(+). The sequence is that of Probable D-serine dehydratase from Burkholderia pseudomallei (strain K96243).